A 219-amino-acid chain; its full sequence is Ribosomal RNA large subunit methyltransferase E (219 aa).

S-adenosyl-L-methionine contacts are provided by glycine 60, tryptophan 62, aspartate 80, aspartate 96, and aspartate 120. Lysine 160 acts as the Proton acceptor in catalysis.

The protein belongs to the class I-like SAM-binding methyltransferase superfamily. RNA methyltransferase RlmE family.

The protein resides in the cytoplasm. It catalyses the reaction uridine(2552) in 23S rRNA + S-adenosyl-L-methionine = 2'-O-methyluridine(2552) in 23S rRNA + S-adenosyl-L-homocysteine + H(+). Specifically methylates the uridine in position 2552 of 23S rRNA at the 2'-O position of the ribose in the fully assembled 50S ribosomal subunit. This Acidithiobacillus ferrooxidans (strain ATCC 23270 / DSM 14882 / CIP 104768 / NCIMB 8455) (Ferrobacillus ferrooxidans (strain ATCC 23270)) protein is Ribosomal RNA large subunit methyltransferase E.